Consider the following 84-residue polypeptide: Small ribosomal subunit protein uS17 (84 aa).

The protein belongs to the universal ribosomal protein uS17 family. Part of the 30S ribosomal subunit.

Its function is as follows. One of the primary rRNA binding proteins, it binds specifically to the 5'-end of 16S ribosomal RNA. This chain is Small ribosomal subunit protein uS17, found in Proteus mirabilis (strain HI4320).